The primary structure comprises 240 residues: UDP-2,3-diacylglucosamine hydrolase (240 aa).

Mn(2+) contacts are provided by D7, H9, D40, N78, and H113. 78 to 79 (NR) contacts substrate. Substrate is bound by residues D121, S159, T163, K166, and H194. Residues H194 and H196 each contribute to the Mn(2+) site.

It belongs to the LpxH family. It depends on Mn(2+) as a cofactor.

It is found in the cell inner membrane. The catalysed reaction is UDP-2-N,3-O-bis[(3R)-3-hydroxytetradecanoyl]-alpha-D-glucosamine + H2O = 2-N,3-O-bis[(3R)-3-hydroxytetradecanoyl]-alpha-D-glucosaminyl 1-phosphate + UMP + 2 H(+). It functions in the pathway glycolipid biosynthesis; lipid IV(A) biosynthesis; lipid IV(A) from (3R)-3-hydroxytetradecanoyl-[acyl-carrier-protein] and UDP-N-acetyl-alpha-D-glucosamine: step 4/6. Functionally, hydrolyzes the pyrophosphate bond of UDP-2,3-diacylglucosamine to yield 2,3-diacylglucosamine 1-phosphate (lipid X) and UMP by catalyzing the attack of water at the alpha-P atom. Involved in the biosynthesis of lipid A, a phosphorylated glycolipid that anchors the lipopolysaccharide to the outer membrane of the cell. This chain is UDP-2,3-diacylglucosamine hydrolase, found in Stutzerimonas stutzeri (strain A1501) (Pseudomonas stutzeri).